The sequence spans 380 residues: Cystathionine gamma-synthase (380 aa).

Lys195 is subject to N6-(pyridoxal phosphate)lysine.

Belongs to the trans-sulfuration enzymes family. Homotetramer. The cofactor is pyridoxal 5'-phosphate.

The protein localises to the cytoplasm. It catalyses the reaction O-succinyl-L-homoserine + L-cysteine = L,L-cystathionine + succinate + H(+). It functions in the pathway amino-acid biosynthesis; L-methionine biosynthesis via de novo pathway; L-cystathionine from O-succinyl-L-homoserine: step 1/1. Four natural products, alpha-lapachone, 9-hydroxy-alpha-lapachone, Paulownin, and Yangambin, show strong inhibitory activities against CGS. All these four inhibitors prevent the binding of OSHS to CGS in a non-competitive fashion. These compounds are specific inhibitors against CGS from H.pylori relative to E.coli since they exhibit very low inhibition activities against CGS from E.coli. Functionally, catalyzes the formation of L-cystathionine from O-succinyl-L-homoserine (OSHS) and L-cysteine, via a gamma-replacement reaction. In the absence of thiol, catalyzes gamma-elimination to form 2-oxobutanoate, succinate and ammonia. The polypeptide is Cystathionine gamma-synthase (metB) (Helicobacter pylori (Campylobacter pylori)).